The chain runs to 217 residues: Neuron-specific vesicular protein calcyon (217 aa).

Positions 1-25 are disordered; that stretch reads MVKLGCSFSGKPGKDPGDQDGAAMD. The Extracellular segment spans residues 1 to 87; that stretch reads MVKLGCSFSG…EEGRRLPTAR (87 aa). N-linked (GlcNAc...) asparagine glycosylation occurs at Asn73. The chain crosses the membrane as a helical span at residues 88-108; sequence MIAFAMALLGCVLIMYKAIWY. The Cytoplasmic portion of the chain corresponds to 109 to 217; sequence DQFTCPDGFL…AGSAAPPPAQ (109 aa). The segment at 162 to 217 is disordered; it reads PAAWGDGYRAAKEERKGPTQAGAAAAATEPPGKPSAKAEKEAARKAAGSAAPPPAQ.

This sequence belongs to the NSG family. In terms of assembly, interacts with CLTA. In terms of processing, glycosylated. As to expression, expressed in the pyramidal cells of the prefrontal cortex, in hypothalamus and in caudate nucleus. No expression in spleen. Up-regulated in the prefrontal cortex of schizophrenic patients with nearly twice the levels of non-schizophrenics.

Its subcellular location is the cytoplasmic vesicle membrane. It is found in the cell membrane. In terms of biological role, interacts with clathrin light chain A and stimulates clathrin self-assembly and clathrin-mediated endocytosis. The protein is Neuron-specific vesicular protein calcyon (CALY) of Homo sapiens (Human).